Here is a 150-residue protein sequence, read N- to C-terminus: Seminal ribonuclease (150 aa).

An N-terminal signal peptide occupies residues 1 to 26 (MALKSLVVLPLLVLVLLLVRVQPSLG). Residues K33 and R36 each contribute to the substrate site. The Proton acceptor role is filled by H38. 4 disulfide bridges follow: C52-C110, C66-C121, C84-C136, and C91-C98. Residues 67–71 (KPVNT) and K92 contribute to the substrate site. N93 carries the post-translational modification Deamidated asparagine; by deterioration. Substrate is bound at residue R111. Residue H145 is the Proton donor of the active site.

Belongs to the pancreatic ribonuclease family. In terms of assembly, homodimer; disulfide-linked. In terms of tissue distribution, seminal plasma. Can reach 3% of the protein content of this fluid.

It is found in the secreted. It carries out the reaction an [RNA] containing cytidine + H2O = an [RNA]-3'-cytidine-3'-phosphate + a 5'-hydroxy-ribonucleotide-3'-[RNA].. It catalyses the reaction an [RNA] containing uridine + H2O = an [RNA]-3'-uridine-3'-phosphate + a 5'-hydroxy-ribonucleotide-3'-[RNA].. With respect to regulation, allosteric regulation by both substrate and reaction products. Functionally, this enzyme hydrolyzes both single- and double-stranded RNA. The chain is Seminal ribonuclease (SRN) from Bos taurus (Bovine).